The following is a 797-amino-acid chain: LPS-assembly protein LptD (797 aa).

A signal peptide spans 1–20 (MHTIRCLILSALSVAGAAQA). Residues 23–45 (SQDAAPAGRQPVGSVASPGLEMP) form a disordered region.

Belongs to the LptD family. As to quaternary structure, component of the lipopolysaccharide transport and assembly complex. Interacts with LptE and LptA.

It localises to the cell outer membrane. Together with LptE, is involved in the assembly of lipopolysaccharide (LPS) at the surface of the outer membrane. The sequence is that of LPS-assembly protein LptD from Bordetella avium (strain 197N).